The chain runs to 61 residues: Large ribosomal subunit protein bL32c (61 aa).

The segment at 37–61 is disordered; that stretch reads SRSFSSGNEHPKPKGFSGQQQQTNK.

This sequence belongs to the bacterial ribosomal protein bL32 family.

The protein localises to the plastid. Its subcellular location is the chloroplast. This is Large ribosomal subunit protein bL32c from Agrostis stolonifera (Creeping bentgrass).